Reading from the N-terminus, the 63-residue chain is PMTDVLAAGDISKAVAAFAAPESFNHKIEEEELGLILKVLLAAGDKDGDGKIGVDEFVTLVSE.

2 consecutive EF-hand domains span residues I28 to K38 and V39 to E63. 7 residues coordinate Ca(2+): E29, E32, D45, D47, D49, K51, and E56.

As to expression, detected in muscle and cutaneous mucus. In the skin, detected in cells in the basal region of the glandular epithelium of the dermal mucus glands (at protein level).

It is found in the cytoplasm. The protein localises to the secreted. Functionally, in muscle, parvalbumin is thought to be involved in relaxation after contraction. It binds two calcium ions. This chain is Parvalbumin alpha, found in Rana temporaria (European common frog).